The primary structure comprises 413 residues: SET and MYND domain-containing protein DDB_G0273591 (413 aa).

Residues 6 to 311 (DGLKLSNSEL…KGDQINISYL (306 aa)) enclose the SET domain. The segment at 51–95 (CYNCIKLIKSPSPQQVPRCFGCNEVWYCSEKCKQDNQAKHQHYEC) adopts an MYND-type zinc-finger fold. Residues 205–232 (DNNNNNNNNNNNNNNNNNNNNNNNNNNN) are disordered. Residues 216–243 (NNNNNNNNNNNNNNNNNNNIEELIKLIR) are a coiled coil.

Belongs to the class V-like SAM-binding methyltransferase superfamily.

Its function is as follows. Probable methyltransferase. This chain is SET and MYND domain-containing protein DDB_G0273591, found in Dictyostelium discoideum (Social amoeba).